The primary structure comprises 317 residues: E3 ubiquitin-protein ligase NRDP1 (317 aa).

The segment at 18–57 (CPICSGVLEEPVQAPHCEHAFCNACITQWFSQQQTCPVDR) adopts an RING-type; degenerate zinc-finger fold. The segment at 78 to 138 (KLQIACDNAV…LPNHNCIKHL (61 aa)) adopts an SIAH-type; degenerate zinc-finger fold.

As to quaternary structure, interacts with USP8, ERBB3, PRKN and BIRC6. Interacts with CSF2RB, EPOR, IL3RA, MYD88 and TBK1. Interacts with CLEC16A. In terms of processing, autoubiquitinated. Autoubiquitination leads to proteasomal degradation. Deubiquitinated by USP8 to get stabilized which induces apoptosis. In terms of tissue distribution, detected in ovary, testis and prostate.

The enzyme catalyses S-ubiquitinyl-[E2 ubiquitin-conjugating enzyme]-L-cysteine + [acceptor protein]-L-lysine = [E2 ubiquitin-conjugating enzyme]-L-cysteine + N(6)-ubiquitinyl-[acceptor protein]-L-lysine.. It participates in protein modification; protein ubiquitination. Its function is as follows. Acts as E3 ubiquitin-protein ligase and regulates the degradation of target proteins. Polyubiquitinates MYD88. Negatively regulates MYD88-dependent production of pro-inflammatory cytokines. Can promote TRIF-dependent production of type I interferon and inhibits infection with vesicular stomatitis virus. Promotes also activation of TBK1 and IRF3. Involved in the ubiquitination of erythropoietin (EPO) and interleukin-3 (IL-3) receptors. Thus, through maintaining basal levels of cytokine receptors, RNF41 is involved in the control of hematopoietic progenitor cell differentiation into myeloerythroid lineages. Contributes to the maintenance of steady-state ERBB3 levels by mediating its growth factor-independent degradation. Involved in the degradation of the inhibitor of apoptosis BIRC6 and thus is an important regulator of cell death by promoting apoptosis. Also acts as a PRKN modifier that accelerates its degradation, resulting in a reduction of PRKN activity, influencing the balance of intracellular redox state. The RNF41-PRKN pathway regulates autophagosome-lysosome fusion during late mitophagy. Mitophagy is a selective form of autophagy necessary for mitochondrial quality control. The chain is E3 ubiquitin-protein ligase NRDP1 (RNF41) from Homo sapiens (Human).